Consider the following 171-residue polypeptide: tRNA-splicing endonuclease subunit Sen15 (171 aa).

The disordered stretch occupies residues 1–35 (MEERGDSEPTPGCSGLGPGGVRGFGDGGGAPSWAP). Ser7 is modified (phosphoserine). Over residues 14 to 30 (SGLGPGGVRGFGDGGGA) the composition is skewed to gly residues. Residue Ser168 is modified to Phosphoserine.

Belongs to the SEN15 family. Homodimer. tRNA splicing endonuclease is a heterotetramer composed of TSEN2, TSEN15, TSEN34/LENG5 and TSEN54. tRNA splicing endonuclease complex also contains proteins of the Pre-mRNA 3' end processing machinery, such as CLP1, CPSF1, CPSF4 and CSTF2. In terms of tissue distribution, widely expressed. Highly expressed in testis and uterus.

The protein localises to the nucleus. It is found in the nucleolus. Its function is as follows. Non-catalytic subunit of the tRNA-splicing endonuclease complex, a complex responsible for identification and cleavage of the splice sites in pre-tRNA. It cleaves pre-tRNA at the 5' and 3' splice sites to release the intron. The products are an intron and two tRNA half-molecules bearing 2',3' cyclic phosphate and 5'-OH termini. There are no conserved sequences at the splice sites, but the intron is invariably located at the same site in the gene, placing the splice sites an invariant distance from the constant structural features of the tRNA body. The tRNA splicing endonuclease is also involved in mRNA processing via its association with pre-mRNA 3'-end processing factors, establishing a link between pre-tRNA splicing and pre-mRNA 3'-end formation, suggesting that the endonuclease subunits function in multiple RNA-processing events. This is tRNA-splicing endonuclease subunit Sen15 (TSEN15) from Homo sapiens (Human).